The sequence spans 344 residues: Glyceraldehyde-3-phosphate dehydrogenase (344 aa).

Residues Thr11–Ile12 and Gly110 contribute to the NAD(+) site. Ser139–Asn141 provides a ligand contact to D-glyceraldehyde 3-phosphate. Residue Cys140 is the Nucleophile of the active site. Arg169 contributes to the NAD(+) binding site. Residue His195–Gly196 participates in D-glyceraldehyde 3-phosphate binding. Gln302 lines the NAD(+) pocket.

Belongs to the glyceraldehyde-3-phosphate dehydrogenase family. In terms of assembly, homotetramer.

The protein resides in the cytoplasm. The enzyme catalyses D-glyceraldehyde 3-phosphate + phosphate + NADP(+) = (2R)-3-phospho-glyceroyl phosphate + NADPH + H(+). It carries out the reaction D-glyceraldehyde 3-phosphate + phosphate + NAD(+) = (2R)-3-phospho-glyceroyl phosphate + NADH + H(+). It functions in the pathway carbohydrate degradation; glycolysis; pyruvate from D-glyceraldehyde 3-phosphate: step 1/5. The chain is Glyceraldehyde-3-phosphate dehydrogenase from Pyrobaculum calidifontis (strain DSM 21063 / JCM 11548 / VA1).